Consider the following 486-residue polypeptide: PTS system N-acetylmuramic acid-specific EIIBC component (486 aa).

Positions 1-89 constitute a PTS EIIB type-1 domain; that stretch reads MAKITQTMIS…NKLIESVING (89 aa). Cys-28 functions as the Phosphocysteine intermediate; for EIIB activity in the catalytic mechanism. A PTS EIIC type-1 domain is found at 127-486; it reads SKFATIFTPL…FFGSKDVDLS (360 aa). Helical transmembrane passes span 129–149, 170–190, 196–216, 230–250, 268–288, 312–332, 347–367, 381–401, 411–431, and 453–473; these read FATI…LLGF, LIAY…ILIG, AFGG…LGYN, FFGY…AAII, MILT…VVIM, AAIL…QGFV, LFPI…ALYF, GAII…VTLP, IGGA…LPVG, and IFAG…VGFL.

Its subcellular location is the cell inner membrane. The catalysed reaction is N-acetyl-beta-D-muramate(out) + N(pros)-phospho-L-histidyl-[protein] = N-acetyl-beta-D-muramate 6-phosphate(in) + L-histidyl-[protein]. In terms of biological role, the phosphoenolpyruvate-dependent sugar phosphotransferase system (sugar PTS), a major carbohydrate active transport system, catalyzes the phosphorylation of incoming sugar substrates concomitantly with their translocation across the cell membrane. This system is involved in N-acetylmuramic acid (MurNAc) transport, yielding cytoplasmic MurNAc-6-P. Is also able to take up anhydro-N-acetylmuramic acid (anhMurNAc), but cannot phosphorylate the carbon 6, probably because of the 1,6-anhydro ring. This is PTS system N-acetylmuramic acid-specific EIIBC component (murP) from Vibrio vulnificus (strain YJ016).